The chain runs to 973 residues: MDGSLYGECGNYIGPEIESDRDSDDSVEDEDLQEPGGSNGWITTINENQNIVLPEDKKYYPIAKEVYGEDVETLVMDEDEQSLEQPIIKPVRDIRFEVGVIKDQTTTYVSTLFLIGLMSNPALVRNVALVGHLQHGKTVFMDMLVEQTHRMSTFNAENDKHMRYTDTRVDEQERNISIKAVPMSLVLEDSRSKSYLCNIMDTPGNVNFSDEMTASLRLADGAVFIVDAAQGVMVNTERAIRHAIQDHLPIVVVINKVDRLITELKLPPRDAYYKLRYTIEVINNHISAASTNAADLPLIDPAAGNVCFASGTAGWSFTLQSFARMYAKLHGVAMDVDKFASRLWGDVYYHPDTRVFNTSPPVGGGERAFVQFILEPLYKIYSQVIGEHKKSVETTLAELGVTLSNSAYKLNVRPLLRLACSSVFGSASGFTDMLVKHIPSPREAAARKVDHSYTGTKDSPIYESMVECDPSGPLMVNVTKLYPKSDTSVFDVFGRVYSGRLQTGQSVRVLGEGYSPEDEEDMTIKEVTKLWIYQARYRIPVSSAPPGSWVLIEGVDASIMKTATLCNASYDEDVYIFRALKFNTLPVVKTATEPLNPSELPKMVEGLRKISKSYPLAITKVEESGEHTILGTGELYLDSIIKDLRELYSEVQVKVADPVVSFCETVVESSSMKCFAETPNKKNKLTMIAEPLDRGLAEDIENGVVSIDWNRVQLGDFFRTKYDWDLLAARSIWAFGPDKQGTNILLDDTLPTEVDRNLMMGVKDSIVQGFQWGAREGPLCDEPIRNVKFKIVDARIAPEPLHRGSGQMIPTARRVAYSAFLMATPRLMEPVYYVEIQTPIDCVTAIYTVLSRRRGYVTSDVPQPGTPAYIVKAFLPVIESFGFETDLRYHTQGQAFCLSVFDHWAIVPGDPLDKAIQLRPLEPAPIQHLAREFMVKTRRRKGMSEDVSGNKFFDEAMMVELAQQTGDLHLQMI.

The interval 1–40 (MDGSLYGECGNYIGPEIESDRDSDDSVEDEDLQEPGGSNG) is disordered. The segment covering 17–33 (IESDRDSDDSVEDEDLQ) has biased composition (acidic residues). Positions 122–408 (ALVRNVALVG…LGVTLSNSAY (287 aa)) constitute a tr-type G domain. The G1 stretch occupies residues 131–138 (GHLQHGKT). A GTP-binding site is contributed by 131 to 138 (GHLQHGKT). The tract at residues 175-179 (NISIK) is G2. A G3 region spans residues 201 to 204 (DTPG). Residues 201–205 (DTPGN) and 255–258 (NKVD) contribute to the GTP site. Residues 255-258 (NKVD) form a G4 region. Positions 381–383 (YSQ) are G5.

The protein belongs to the TRAFAC class translation factor GTPase superfamily. Classic translation factor GTPase family. Expressed in flower buds, open flowers and siliques. Expressed at low levels in rosettes leaves, cauline leaves and stems.

It localises to the nucleus speckle. Splicing factor involved in pre-mRNA splicing and component of the spliceosome. This is 109 kDa U5 small nuclear ribonucleoprotein component GFL from Arabidopsis thaliana (Mouse-ear cress).